The primary structure comprises 155 residues: Interleukin-2 (155 aa).

An N-terminal signal peptide occupies residues 1–20 (MYKMQLLSCIALTLVLVANS). Thr23 carries an O-linked (GalNAc...) threonine glycan. A disulfide bond links Cys79 and Cys127.

The protein belongs to the IL-2 family.

The protein localises to the secreted. Cytokine produced by activated CD4-positive helper T-cells and to a lesser extend activated CD8-positive T-cells and natural killer (NK) cells that plays pivotal roles in the immune response and tolerance. Binds to a receptor complex composed of either the high-affinity trimeric IL-2R (IL2RA/CD25, IL2RB/CD122 and IL2RG/CD132) or the low-affinity dimeric IL-2R (IL2RB and IL2RG). Interaction with the receptor leads to oligomerization and conformation changes in the IL-2R subunits resulting in downstream signaling starting with phosphorylation of JAK1 and JAK3. In turn, JAK1 and JAK3 phosphorylate the receptor to form a docking site leading to the phosphorylation of several substrates including STAT5. This process leads to activation of several pathways including STAT, phosphoinositide-3-kinase/PI3K and mitogen-activated protein kinase/MAPK pathways. Functions as a T-cell growth factor and can increase NK-cell cytolytic activity as well. Promotes strong proliferation of activated B-cells and subsequently immunoglobulin production. Plays a pivotal role in regulating the adaptive immune system by controlling the survival and proliferation of regulatory T-cells, which are required for the maintenance of immune tolerance. Moreover, participates in the differentiation and homeostasis of effector T-cell subsets, including Th1, Th2, Th17 as well as memory CD8-positive T-cells. This chain is Interleukin-2 (IL2), found in Halichoerus grypus (Gray seal).